The following is a 599-amino-acid chain: Elongation factor 4 (599 aa).

The tr-type G domain maps to S5–V187. Residues D17 to T22 and N134 to D137 contribute to the GTP site.

It belongs to the TRAFAC class translation factor GTPase superfamily. Classic translation factor GTPase family. LepA subfamily.

Its subcellular location is the cell inner membrane. The catalysed reaction is GTP + H2O = GDP + phosphate + H(+). Its function is as follows. Required for accurate and efficient protein synthesis under certain stress conditions. May act as a fidelity factor of the translation reaction, by catalyzing a one-codon backward translocation of tRNAs on improperly translocated ribosomes. Back-translocation proceeds from a post-translocation (POST) complex to a pre-translocation (PRE) complex, thus giving elongation factor G a second chance to translocate the tRNAs correctly. Binds to ribosomes in a GTP-dependent manner. The sequence is that of Elongation factor 4 from Teredinibacter turnerae (strain ATCC 39867 / T7901).